The sequence spans 341 residues: Adenine deaminase (341 aa).

His-24, His-26, and His-204 together coordinate Zn(2+). The active-site Proton donor is Glu-207. Residue Asp-285 coordinates Zn(2+). Asp-286 lines the substrate pocket.

The protein belongs to the metallo-dependent hydrolases superfamily. Adenosine and AMP deaminases family. Adenine deaminase type 2 subfamily. It depends on Zn(2+) as a cofactor.

The enzyme catalyses adenine + H2O + H(+) = hypoxanthine + NH4(+). Functionally, catalyzes the hydrolytic deamination of adenine to hypoxanthine. Plays an important role in the purine salvage pathway and in nitrogen catabolism. The polypeptide is Adenine deaminase (Sphingopyxis alaskensis (strain DSM 13593 / LMG 18877 / RB2256) (Sphingomonas alaskensis)).